Here is a 159-residue protein sequence, read N- to C-terminus: Endoribonuclease YbeY (159 aa).

Positions 125, 129, and 135 each coordinate Zn(2+).

This sequence belongs to the endoribonuclease YbeY family. Requires Zn(2+) as cofactor.

It is found in the cytoplasm. In terms of biological role, single strand-specific metallo-endoribonuclease involved in late-stage 70S ribosome quality control and in maturation of the 3' terminus of the 16S rRNA. The protein is Endoribonuclease YbeY of Enterococcus faecalis (strain ATCC 700802 / V583).